The primary structure comprises 21 residues: Fibrinogen beta chain (21 aa).

Position 1 is a pyrrolidone carboxylic acid (Q1). The span at 1 to 11 (QHSTDYDEEEE) shows a compositional bias: acidic residues. The interval 1-21 (QHSTDYDEEEEDRAKLHLDAR) is disordered. An O-linked (GalNAc...) threonine glycan is attached at T4. Sulfotyrosine is present on Y6. Basic and acidic residues predominate over residues 12–21 (DRAKLHLDAR).

As to quaternary structure, heterohexamer; disulfide linked. Contains 2 sets of 3 non-identical chains (alpha, beta and gamma). The 2 heterotrimers are in head to head conformation with the N-termini in a small central domain. Conversion of fibrinogen to fibrin is triggered by thrombin, which cleaves fibrinopeptides A and B from alpha and beta chains, and thus exposes the N-terminal polymerization sites responsible for the formation of the soft clot.

Its subcellular location is the secreted. Functionally, cleaved by the protease thrombin to yield monomers which, together with fibrinogen alpha (FGA) and fibrinogen gamma (FGG), polymerize to form an insoluble fibrin matrix. Fibrin has a major function in hemostasis as one of the primary components of blood clots. In addition, functions during the early stages of wound repair to stabilize the lesion and guide cell migration during re-epithelialization. Was originally thought to be essential for platelet aggregation, based on in vitro studies using anticoagulated blood. However subsequent studies have shown that it is not absolutely required for thrombus formation in vivo. Enhances expression of SELP in activated platelets. Maternal fibrinogen is essential for successful pregnancy. Fibrin deposition is also associated with infection, where it protects against IFNG-mediated hemorrhage. May also facilitate the antibacterial immune response via both innate and T-cell mediated pathways. The polypeptide is Fibrinogen beta chain (FGB) (Cervus elaphus (Red deer)).